A 46-amino-acid chain; its full sequence is Defensin-like protein AX2 (46 aa).

4 disulfide bridges follow: Cys3–Cys46, Cys14–Cys34, Cys20–Cys40, and Cys24–Cys42.

In terms of tissue distribution, leaves and flowers.

Strong inhibiting activity against C.beticola and other filamentous fungi. Little or no effect against bacteria. The polypeptide is Defensin-like protein AX2 (Beta vulgaris (Sugar beet)).